The following is a 153-amino-acid chain: Ribosome maturation factor RimP (153 aa).

Belongs to the RimP family.

It is found in the cytoplasm. In terms of biological role, required for maturation of 30S ribosomal subunits. In Burkholderia mallei (strain NCTC 10229), this protein is Ribosome maturation factor RimP.